Here is a 930-residue protein sequence, read N- to C-terminus: A disintegrin and metalloproteinase with thrombospondin motifs 5 (930 aa).

The first 21 residues, 1–21 (MRLEWAPLLLLLLLLSASCLS), serve as a signal peptide directing secretion. The propeptide occupies 22 to 261 (LAADSPAAAP…PQTWWRRRRR (240 aa)). Positions 31-53 (PAQDKTRQPQAAAAAAEPDQPQG) are enriched in low complexity. 2 disordered regions span residues 31–68 (PAQD…LAGQ) and 207–231 (ASCE…SRRR). Positions 207–214 (ASCETPAS) match the Cysteine switch motif. Cys-209 contributes to the Zn(2+) binding site. Residues 211–225 (TPASPSGPQESPSVH) show a composition bias toward polar residues. A Peptidase M12B domain is found at 267 to 476 (RQVELLLVAD…GHGNCLLDLP (210 aa)). Disulfide bonds link Cys-342–Cys-394, Cys-371–Cys-376, Cys-388–Cys-471, Cys-426–Cys-455, Cys-497–Cys-519, Cys-508–Cys-529, Cys-514–Cys-548, and Cys-542–Cys-553. A Zn(2+)-binding site is contributed by His-410. Glu-411 is an active-site residue. Positions 414 and 420 each coordinate Zn(2+). Residues 485 to 566 (ELPGQTYDAT…TKKKYYSTSS (82 aa)) enclose the Disintegrin domain. Asn-498 carries an N-linked (GlcNAc...) asparagine glycan. The 56-residue stretch at 567-622 (HGNWGSWGPWGQCSRSCGGGVQFAYRHCNNPAPRNSGRYCTGKRAIYRSCSVTPCP) folds into the TSP type-1 1 domain. 2 C-linked (Man) tryptophan glycosylation sites follow: Trp-570 and Trp-573. 3 disulfide bridges follow: Cys-579-Cys-616, Cys-583-Cys-621, and Cys-594-Cys-606. Residue Ser-582 is glycosylated (O-linked (Fuc...) serine). N-linked (GlcNAc...) asparagine glycans are attached at residues Asn-728, Asn-802, and Asn-807. The interval 732–874 (TKIIGTFNKK…HGSNKVGPHS (143 aa)) is spacer. The region spanning 875 to 929 (TQLQWVTGPWLACSRTCDTGWHTRTVQCQDGNRKLAKGCLLSQRPSAFKQCLLKK) is the TSP type-1 2 domain.

Zn(2+) serves as cofactor. Post-translationally, the precursor is cleaved by furin and PCSK7 outside of the cell. Glycosylated. Can be O-fucosylated by POFUT2 on a serine or a threonine residue found within the consensus sequence C1-X(2)-(S/T)-C2-G of the TSP type-1 repeat domains where C1 and C2 are the first and second cysteine residue of the repeat, respectively. Fucosylated repeats can then be further glycosylated by the addition of a beta-1,3-glucose residue by the glucosyltransferase, B3GALTL. Fucosylation mediates the efficient secretion of ADAMTS family members. Can also be C-glycosylated with one or two mannose molecules on tryptophan residues within the consensus sequence W-X-X-W of the TPRs, and N-glycosylated. These other glycosylations can also facilitate secretion. In terms of tissue distribution, expressed in skeletal muscle.

The protein localises to the secreted. The protein resides in the extracellular space. It localises to the extracellular matrix. Metalloproteinase that plays an important role in connective tissue organization, development, inflammation and cell migration. Extracellular matrix (ECM) degrading enzyme that shows proteolytic activity toward the hyalectan group of chondroitin sulfate proteoglycans (CSPGs) including ACAN, VCAN, BCAN and NCAN. Cleavage within the hyalectans occurs at Glu-Xaa recognition motifs. Plays a role in embryonic development, including limb and cardiac morphogenesis, and skeletal muscle development through its VCAN remodeling properties. Cleaves VCAN in the pericellular matrix surrounding myoblasts, facilitating myoblast contact and fusion which is required for skeletal muscle development and regeneration. Participates in the development of brown adipose tissue and browning of white adipose tissue. Plays an important role for T-lymphocyte migration from draining lymph nodes following viral infection. This Mus musculus (Mouse) protein is A disintegrin and metalloproteinase with thrombospondin motifs 5 (Adamts5).